The chain runs to 307 residues: Ribosomal RNA small subunit methyltransferase H (307 aa).

S-adenosyl-L-methionine is bound by residues 33–35, Asp51, Phe82, Asp96, and Gln103; that span reads GGY.

This sequence belongs to the methyltransferase superfamily. RsmH family.

The protein resides in the cytoplasm. It catalyses the reaction cytidine(1402) in 16S rRNA + S-adenosyl-L-methionine = N(4)-methylcytidine(1402) in 16S rRNA + S-adenosyl-L-homocysteine + H(+). Its function is as follows. Specifically methylates the N4 position of cytidine in position 1402 (C1402) of 16S rRNA. This Rickettsia africae (strain ESF-5) protein is Ribosomal RNA small subunit methyltransferase H.